The following is a 743-amino-acid chain: Phosphoribosylformylglycinamidine synthase subunit PurL (743 aa).

The active site involves His50. Positions 53 and 92 each coordinate ATP. Glu94 contributes to the Mg(2+) binding site. Residues 95–98 and Arg117 each bind substrate; that span reads SHNH. The active-site Proton acceptor is His96. Asp118 is a Mg(2+) binding site. Gln241 serves as a coordination point for substrate. Asp269 contributes to the Mg(2+) binding site. A substrate-binding site is contributed by 313 to 315; that stretch reads ESQ. Asp494 and Gly531 together coordinate ATP. Mg(2+) is bound at residue Asn532. Ser534 is a substrate binding site.

It belongs to the FGAMS family. In terms of assembly, monomer. Part of the FGAM synthase complex composed of 1 PurL, 1 PurQ and 2 PurS subunits.

Its subcellular location is the cytoplasm. It catalyses the reaction N(2)-formyl-N(1)-(5-phospho-beta-D-ribosyl)glycinamide + L-glutamine + ATP + H2O = 2-formamido-N(1)-(5-O-phospho-beta-D-ribosyl)acetamidine + L-glutamate + ADP + phosphate + H(+). Its pathway is purine metabolism; IMP biosynthesis via de novo pathway; 5-amino-1-(5-phospho-D-ribosyl)imidazole from N(2)-formyl-N(1)-(5-phospho-D-ribosyl)glycinamide: step 1/2. In terms of biological role, part of the phosphoribosylformylglycinamidine synthase complex involved in the purines biosynthetic pathway. Catalyzes the ATP-dependent conversion of formylglycinamide ribonucleotide (FGAR) and glutamine to yield formylglycinamidine ribonucleotide (FGAM) and glutamate. The FGAM synthase complex is composed of three subunits. PurQ produces an ammonia molecule by converting glutamine to glutamate. PurL transfers the ammonia molecule to FGAR to form FGAM in an ATP-dependent manner. PurS interacts with PurQ and PurL and is thought to assist in the transfer of the ammonia molecule from PurQ to PurL. This Sinorhizobium fredii (strain HH103) protein is Phosphoribosylformylglycinamidine synthase subunit PurL.